Consider the following 140-residue polypeptide: L-fucose mutarotase (140 aa).

Histidine 22 functions as the Proton donor in the catalytic mechanism. Residues aspartate 30, arginine 107, and 129 to 131 (YGN) contribute to the substrate site.

This sequence belongs to the RbsD / FucU family. FucU mutarotase subfamily. In terms of assembly, homodecamer.

The protein resides in the cytoplasm. It carries out the reaction alpha-L-fucose = beta-L-fucose. It functions in the pathway carbohydrate metabolism; L-fucose metabolism. In terms of biological role, involved in the anomeric conversion of L-fucose. The sequence is that of L-fucose mutarotase from Salmonella arizonae (strain ATCC BAA-731 / CDC346-86 / RSK2980).